A 224-amino-acid polypeptide reads, in one-letter code: Ribosome maturation factor RimM (224 aa).

Residues 1–12 (MARRPGSSSRGP) are compositionally biased toward low complexity. Disordered regions lie at residues 1 to 46 (MARR…PSLV) and 204 to 224 (VADP…DDPG). The region spanning 137 to 211 (EDEFFLTDLI…KVVADPPEDL (75 aa)) is the PRC barrel domain.

Belongs to the RimM family. In terms of assembly, binds ribosomal protein uS19.

The protein localises to the cytoplasm. Functionally, an accessory protein needed during the final step in the assembly of 30S ribosomal subunit, possibly for assembly of the head region. Essential for efficient processing of 16S rRNA. May be needed both before and after RbfA during the maturation of 16S rRNA. It has affinity for free ribosomal 30S subunits but not for 70S ribosomes. The sequence is that of Ribosome maturation factor RimM from Methylorubrum populi (strain ATCC BAA-705 / NCIMB 13946 / BJ001) (Methylobacterium populi).